A 95-amino-acid polypeptide reads, in one-letter code: Secreted RxLR effector protein 20 (95 aa).

Residues 1 to 20 form the signal peptide; the sequence is MQSPYIILFALVTLLGSISG. The RxLR motif lies at 47 to 50; it reads RLLR.

It belongs to the RxLR effector family.

The protein resides in the secreted. It localises to the host nucleus. Its subcellular location is the host cytoplasm. Its function is as follows. Secreted effector that partially suppresses the host cell death induced by cell death-inducing proteins. The chain is Secreted RxLR effector protein 20 from Plasmopara viticola (Downy mildew of grapevine).